The chain runs to 247 residues: Ribosomal RNA small subunit methyltransferase G (247 aa).

S-adenosyl-L-methionine contacts are provided by G86, L91, and R154.

This sequence belongs to the methyltransferase superfamily. RNA methyltransferase RsmG family.

It is found in the cytoplasm. In terms of biological role, specifically methylates the N7 position of a guanine in 16S rRNA. The sequence is that of Ribosomal RNA small subunit methyltransferase G from Leptospira biflexa serovar Patoc (strain Patoc 1 / Ames).